The chain runs to 490 residues: Bifunctional dihydrocamalexate synthase/camalexin synthase (490 aa).

Residues 1–21 form a helical membrane-spanning segment; the sequence is MSVFLCFLVLLPLILIFLNVL.

It belongs to the cytochrome P450 family.

The protein localises to the membrane. The enzyme catalyses 2-(L-cystein-S-yl)-2-(1H-indol-3-yl)-acetonitrile + 2 reduced [NADPH--hemoprotein reductase] + 2 O2 = camalexin + hydrogen cyanide + 2 oxidized [NADPH--hemoprotein reductase] + CO2 + 4 H2O + 2 H(+). It carries out the reaction 2-(L-cystein-S-yl)-2-(1H-indol-3-yl)-acetonitrile + reduced [NADPH--hemoprotein reductase] + O2 = (R)-dihydrocamalexate + hydrogen cyanide + oxidized [NADPH--hemoprotein reductase] + 2 H2O + 2 H(+). It catalyses the reaction (R)-dihydrocamalexate + reduced [NADPH--hemoprotein reductase] + O2 = camalexin + oxidized [NADPH--hemoprotein reductase] + CO2 + 2 H2O. In terms of biological role, multifunctional enzyme involved in the biosynthesis of the indole-derived phytoalexin camalexin. Catalyzes two reactions, the formation of dihydrocamalexate from indole-3-acetonitrile-cysteine conjugate and the oxidative decarboxylation of dihydrocamalexate which is the final step in camalexin biosynthesis. Required for the resistance to the fungal pathogens A.brassicicola, B.cinerea, B.elliptica, B.tulipae, L.maculans and Colletotrichum higginsianum. Seems not to be required for resistance to P.syringae, P.porri, and not involved in age-related resistance. In Arabidopsis thaliana (Mouse-ear cress), this protein is Bifunctional dihydrocamalexate synthase/camalexin synthase (CYP71B15).